Consider the following 105-residue polypeptide: Met repressor (105 aa).

It belongs to the MetJ family. In terms of assembly, homodimer.

It localises to the cytoplasm. In terms of biological role, this regulatory protein, when combined with SAM (S-adenosylmethionine) represses the expression of the methionine regulon and of enzymes involved in SAM synthesis. This chain is Met repressor, found in Pectobacterium carotovorum subsp. carotovorum (strain PC1).